Reading from the N-terminus, the 217-residue chain is tRNA (guanine-N(7)-)-methyltransferase (217 aa).

S-adenosyl-L-methionine-binding residues include Glu44, Asp69, Asp96, and Asp118. Asp118 is a catalytic residue. Lys122 provides a ligand contact to substrate. The interaction with RNA stretch occupies residues 124–129 (RHEKRR). Substrate is bound by residues Asp154 and 193–196 (TEYE).

The protein belongs to the class I-like SAM-binding methyltransferase superfamily. TrmB family.

The enzyme catalyses guanosine(46) in tRNA + S-adenosyl-L-methionine = N(7)-methylguanosine(46) in tRNA + S-adenosyl-L-homocysteine. It functions in the pathway tRNA modification; N(7)-methylguanine-tRNA biosynthesis. Functionally, catalyzes the formation of N(7)-methylguanine at position 46 (m7G46) in tRNA. This Lactococcus lactis subsp. cremoris (strain SK11) protein is tRNA (guanine-N(7)-)-methyltransferase.